The primary structure comprises 386 residues: MNIHEYQGKEVLRKYGVAVPEGKVAFTADEAVKAAEALSSSVYVVKAQIHAGGRGKAGGVKIAKSKEEVKAYAEELLGKTLVTHQTGPDGQQIKRLLIEEGCDIKKEYYVGLVLDRATSRIVLMASEEGGTEIEEVAEKTPEKIVKEVIDPAVGLQSYQARKIAFAINIPKELVGQAVKFMMGLYKAFTEKDCSIAEINPLVVTGDGKVMALDAKLNFDSNALYRQKDILEYRDLDEEDPKEIEASKYDLSYISLDGNIGCMVNGAGLAMSTMDIIKHYGGEPANFLDVGGGATAEKVTEAFKIILSDQNVKGIFVNIFGGIMKCDVIAEGVVEATKQVGLTLPLVVRLEGTNVDLGKKILDDSGLNITSAESMADGAQKIVSLVK.

An ATP-grasp domain is found at Lys9–Glu244. ATP is bound by residues Lys46, Gly53–Gly55, Glu99, Cys102, and Glu107. Mg(2+)-binding residues include Asn199 and Asp213. Residues Asn264 and Gly321–Met323 contribute to the substrate site.

It belongs to the succinate/malate CoA ligase beta subunit family. As to quaternary structure, heterotetramer of two alpha and two beta subunits. Requires Mg(2+) as cofactor.

It carries out the reaction succinate + ATP + CoA = succinyl-CoA + ADP + phosphate. The enzyme catalyses GTP + succinate + CoA = succinyl-CoA + GDP + phosphate. Its pathway is carbohydrate metabolism; tricarboxylic acid cycle; succinate from succinyl-CoA (ligase route): step 1/1. Its function is as follows. Succinyl-CoA synthetase functions in the citric acid cycle (TCA), coupling the hydrolysis of succinyl-CoA to the synthesis of either ATP or GTP and thus represents the only step of substrate-level phosphorylation in the TCA. The beta subunit provides nucleotide specificity of the enzyme and binds the substrate succinate, while the binding sites for coenzyme A and phosphate are found in the alpha subunit. The protein is Succinate--CoA ligase [ADP-forming] subunit beta of Bacillus licheniformis (strain ATCC 14580 / DSM 13 / JCM 2505 / CCUG 7422 / NBRC 12200 / NCIMB 9375 / NCTC 10341 / NRRL NRS-1264 / Gibson 46).